A 34-amino-acid chain; its full sequence is Photosystem II reaction center protein M (34 aa).

A helical membrane pass occupies residues I5 to L25.

It belongs to the PsbM family. PSII is composed of 1 copy each of membrane proteins PsbA, PsbB, PsbC, PsbD, PsbE, PsbF, PsbH, PsbI, PsbJ, PsbK, PsbL, PsbM, PsbT, PsbX, PsbY, PsbZ, Psb30/Ycf12, at least 3 peripheral proteins of the oxygen-evolving complex and a large number of cofactors. It forms dimeric complexes.

Its subcellular location is the plastid. The protein resides in the chloroplast thylakoid membrane. In terms of biological role, one of the components of the core complex of photosystem II (PSII). PSII is a light-driven water:plastoquinone oxidoreductase that uses light energy to abstract electrons from H(2)O, generating O(2) and a proton gradient subsequently used for ATP formation. It consists of a core antenna complex that captures photons, and an electron transfer chain that converts photonic excitation into a charge separation. This subunit is found at the monomer-monomer interface. The protein is Photosystem II reaction center protein M of Pleurastrum terricola (Filamentous green alga).